The chain runs to 258 residues: UPF0328 protein ECU02_0090 (258 aa).

Belongs to the UPF0328 family.

This is UPF0328 protein ECU02_0090 from Encephalitozoon cuniculi (strain GB-M1) (Microsporidian parasite).